The primary structure comprises 476 residues: Glutamate--tRNA ligase (476 aa).

A 'HIGH' region motif is present at residues 9–19 (PSPTGTLHIGT). Positions 248–252 (KLSKR) match the 'KMSKS' region motif. Residue Lys251 participates in ATP binding.

Belongs to the class-I aminoacyl-tRNA synthetase family. Glutamate--tRNA ligase type 1 subfamily. In terms of assembly, monomer.

It is found in the cytoplasm. The catalysed reaction is tRNA(Glu) + L-glutamate + ATP = L-glutamyl-tRNA(Glu) + AMP + diphosphate. Catalyzes the attachment of glutamate to tRNA(Glu) in a two-step reaction: glutamate is first activated by ATP to form Glu-AMP and then transferred to the acceptor end of tRNA(Glu). The polypeptide is Glutamate--tRNA ligase (Synechococcus sp. (strain CC9311)).